Consider the following 132-residue polypeptide: D-ribose pyranase (132 aa).

The active-site Proton donor is His20. Residues Asp28, His99, and 121–123 contribute to the substrate site; that span reads YSN.

It belongs to the RbsD / FucU family. RbsD subfamily. As to quaternary structure, homodecamer.

The protein localises to the cytoplasm. The enzyme catalyses beta-D-ribopyranose = beta-D-ribofuranose. It functions in the pathway carbohydrate metabolism; D-ribose degradation; D-ribose 5-phosphate from beta-D-ribopyranose: step 1/2. Functionally, catalyzes the interconversion of beta-pyran and beta-furan forms of D-ribose. This is D-ribose pyranase from Pseudomonas putida (strain GB-1).